Reading from the N-terminus, the 428-residue chain is Probable G-protein coupled receptor (428 aa).

Topologically, residues 1-46 (MMADKTSPMITSDHSISNFSTGLFGPHPTVPPDVGVVTSSQSQMKD) are extracellular. A glycan (N-linked (GlcNAc...) asparagine) is linked at Asn-18. Residues 47–67 (LFGLFCMVTLNLIALLANTGV) form a helical membrane-spanning segment. Residues 68-93 (MVAIARAPHLKKFAFVCHLCAVDVLC) are Cytoplasmic-facing. The chain crosses the membrane as a helical span at residues 94 to 114 (AILLMPLGIISSSPFFGTVVF). Over 115 to 120 (TILECQ) the chain is Extracellular. A helical membrane pass occupies residues 121-141 (VYIFLNVFLIWLSILTITAIS). Residues 142 to 162 (VERYFYIVHPMRYEVKMTINL) are Cytoplasmic-facing. The chain crosses the membrane as a helical span at residues 163-183 (VIGVMLLIWFKSLLLALVTLF). At 184–210 (GWPPYGHQSSIAASHCSLHASHSRLRG) the chain is on the extracellular side. Residues 211–231 (VFAVLFCVICFLAPVVVIFSV) form a helical membrane-spanning segment. Over 232–293 (YSAVYKVARS…PERAFSGGKA (62 aa)) the chain is Cytoplasmic. The helical transmembrane segment at 294 to 314 (ALTLAFIVGQFLVCWLPFFIF) threads the bilayer. The Extracellular segment spans residues 315 to 428 (HLQMSLTGSM…IPGQIPEEQA (114 aa)). Over residues 398 to 414 (SETHPSFANSNPRNMEN) the composition is skewed to polar residues. The interval 398–428 (SETHPSFANSNPRNMENQAHKIPGQIPEEQA) is disordered.

Belongs to the G-protein coupled receptor 1 family.

Its subcellular location is the cell membrane. The sequence is that of Probable G-protein coupled receptor from Oryzias latipes (Japanese rice fish).